A 143-amino-acid chain; its full sequence is Nucleoside diphosphate kinase (143 aa).

ATP contacts are provided by Lys11, Phe59, Arg87, Thr93, Arg104, and Asn114. The active-site Pros-phosphohistidine intermediate is the His117.

It belongs to the NDK family. In terms of assembly, homotetramer. Mg(2+) serves as cofactor.

It localises to the cytoplasm. It carries out the reaction a 2'-deoxyribonucleoside 5'-diphosphate + ATP = a 2'-deoxyribonucleoside 5'-triphosphate + ADP. It catalyses the reaction a ribonucleoside 5'-diphosphate + ATP = a ribonucleoside 5'-triphosphate + ADP. Functionally, major role in the synthesis of nucleoside triphosphates other than ATP. The ATP gamma phosphate is transferred to the NDP beta phosphate via a ping-pong mechanism, using a phosphorylated active-site intermediate. This Psychrobacter cryohalolentis (strain ATCC BAA-1226 / DSM 17306 / VKM B-2378 / K5) protein is Nucleoside diphosphate kinase.